The following is a 519-amino-acid chain: Bifunctional purine biosynthesis protein PurH (519 aa).

The MGS-like domain maps to 1–147 (MAKITRALIS…KNNHDVTVLV (147 aa)).

This sequence belongs to the PurH family.

The catalysed reaction is (6R)-10-formyltetrahydrofolate + 5-amino-1-(5-phospho-beta-D-ribosyl)imidazole-4-carboxamide = 5-formamido-1-(5-phospho-D-ribosyl)imidazole-4-carboxamide + (6S)-5,6,7,8-tetrahydrofolate. It carries out the reaction IMP + H2O = 5-formamido-1-(5-phospho-D-ribosyl)imidazole-4-carboxamide. It functions in the pathway purine metabolism; IMP biosynthesis via de novo pathway; 5-formamido-1-(5-phospho-D-ribosyl)imidazole-4-carboxamide from 5-amino-1-(5-phospho-D-ribosyl)imidazole-4-carboxamide (10-formyl THF route): step 1/1. The protein operates within purine metabolism; IMP biosynthesis via de novo pathway; IMP from 5-formamido-1-(5-phospho-D-ribosyl)imidazole-4-carboxamide: step 1/1. The polypeptide is Bifunctional purine biosynthesis protein PurH (Trichlorobacter lovleyi (strain ATCC BAA-1151 / DSM 17278 / SZ) (Geobacter lovleyi)).